A 91-amino-acid polypeptide reads, in one-letter code: Small ribosomal subunit protein uS19 (91 aa).

This sequence belongs to the universal ribosomal protein uS19 family.

Its function is as follows. Protein S19 forms a complex with S13 that binds strongly to the 16S ribosomal RNA. The chain is Small ribosomal subunit protein uS19 from Halorhodospira halophila (strain DSM 244 / SL1) (Ectothiorhodospira halophila (strain DSM 244 / SL1)).